Consider the following 431-residue polypeptide: Reticulon-like protein B17 (431 aa).

Disordered stretches follow at residues 1 to 110 and 126 to 152; these read MEST…SEAV and PPRK…SSSD. The segment covering 12-26 has biased composition (polar residues); the sequence is TKSASRLQDSSNPPN. The span at 126–138 shows a compositional bias: basic residues; sequence PPRKRKTNGRPKK. Residues 142–152 show a composition bias toward polar residues; sequence SSAPPLCSSSD. The Reticulon domain occupies 168–355; the sequence is ISDLVMWRDV…VTAFWNLTSI (188 aa). 4 consecutive transmembrane segments (helical) span residues 177 to 197, 202 to 222, 286 to 306, and 349 to 369; these read VAKS…SCFA, FSVF…SFLS, YGHL…SFTI, and FWNL…LVIF. Acidic residues predominate over residues 382-415; that stretch reads EVEPVENEQEEETLPQEEETVPQEEETVPQEEEQ. The segment at 382-422 is disordered; sequence EVEPVENEQEEETLPQEEETVPQEEETVPQEEEQTQPSEER.

It is found in the endoplasmic reticulum membrane. The chain is Reticulon-like protein B17 (RTNLB17) from Arabidopsis thaliana (Mouse-ear cress).